The chain runs to 134 residues: Arginine decarboxylase proenzyme (134 aa).

The active-site Schiff-base intermediate with substrate; via pyruvic acid is Ser82. At Ser82 the chain carries Pyruvic acid (Ser); by autocatalysis. His87 serves as the catalytic Proton acceptor; for processing activity. Cys102 serves as the catalytic Proton donor; for catalytic activity.

The protein belongs to the prokaryotic AdoMetDC family. Type 1 subfamily. Heterooctamer of four alpha and four beta chains arranged as a tetramer of alpha/beta heterodimers. Pyruvate is required as a cofactor. Is synthesized initially as an inactive proenzyme. Formation of the active enzyme involves a self-maturation process in which the active site pyruvoyl group is generated from an internal serine residue via an autocatalytic post-translational modification. Two non-identical subunits are generated from the proenzyme in this reaction, and the pyruvate is formed at the N-terminus of the alpha chain, which is derived from the carboxyl end of the proenzyme. The post-translation cleavage follows an unusual pathway, termed non-hydrolytic serinolysis, in which the side chain hydroxyl group of the serine supplies its oxygen atom to form the C-terminus of the beta chain, while the remainder of the serine residue undergoes an oxidative deamination to produce ammonia and the pyruvoyl group blocking the N-terminus of the alpha chain.

The catalysed reaction is L-arginine + H(+) = agmatine + CO2. It participates in amine and polyamine biosynthesis; agmatine biosynthesis; agmatine from L-arginine: step 1/1. In terms of biological role, specifically catalyzes the decarboxylation of L-arginine to agmatine. Has no S-adenosylmethionine decarboxylase (AdoMetDC) activity. The protein is Arginine decarboxylase proenzyme of Saccharolobus islandicus (strain M.16.4 / Kamchatka #3) (Sulfolobus islandicus).